Reading from the N-terminus, the 99-residue chain is UPF0235 protein Sbal223_1335 (99 aa).

Belongs to the UPF0235 family.

This Shewanella baltica (strain OS223) protein is UPF0235 protein Sbal223_1335.